We begin with the raw amino-acid sequence, 489 residues long: MELNELQQQRLAKLERLRAAGIDPYPPRAQRTHTIGEVLAGFDQLMDRGEQVTVAGRIVGARRVLGKLAFAHIEDESGRIQLWLSRGDLGDEWFDRFRDDLDTFDIVEASGTLRRTQRGEPSVFVTRMGVLAKSLNPPPEKWHGLSDIEERHRQRYLDLIVNPEVRDVFRTRATIVRTMRRFLDERGFLEVETPTLQPIYGGASARPFITHHNQLKQDLYLRIAVELYLKRLIVGGFERVYEISKVFRNEGVDRTHNPEFTMMECYQAYADYHDMMRLVEDLYRALALEVTGSTTIVFQGQTIDFGPAWRRVSIPAAIAERTGIDILELTELEPLQEAIRAAGLKVDLKPGWGRQVDELFSVYVQPALIQPTFVLDHPVALSPLAKRRPDQPLLVERFEPVVAGMEIGNAFTELNDPLDQEQRFLEQGRAYDAGDDEAQQMDVDFLNALMYGMPPTGGLGIGIDRTVMLFTDQPSIREVILFPHLRPRE.

Residues E399 and E406 each contribute to the Mg(2+) site.

The protein belongs to the class-II aminoacyl-tRNA synthetase family. In terms of assembly, homodimer. Requires Mg(2+) as cofactor.

Its subcellular location is the cytoplasm. The catalysed reaction is tRNA(Lys) + L-lysine + ATP = L-lysyl-tRNA(Lys) + AMP + diphosphate. This chain is Lysine--tRNA ligase, found in Roseiflexus castenholzii (strain DSM 13941 / HLO8).